A 362-amino-acid chain; its full sequence is Spermidine/putrescine import ATP-binding protein PotA (362 aa).

In terms of domain architecture, ABC transporter spans 6-237 (ISFKHVVKSY…PINHYVADFI (232 aa)). An ATP-binding site is contributed by 39–46 (GPSGCGKT).

It belongs to the ABC transporter superfamily. Spermidine/putrescine importer (TC 3.A.1.11.1) family. In terms of assembly, the complex is composed of two ATP-binding proteins (PotA), two transmembrane proteins (PotB and PotC) and a solute-binding protein (PotD).

It localises to the cell membrane. It carries out the reaction ATP + H2O + polyamine-[polyamine-binding protein]Side 1 = ADP + phosphate + polyamineSide 2 + [polyamine-binding protein]Side 1.. In terms of biological role, part of the ABC transporter complex PotABCD involved in spermidine/putrescine import. Responsible for energy coupling to the transport system. The polypeptide is Spermidine/putrescine import ATP-binding protein PotA (Ligilactobacillus salivarius (strain UCC118) (Lactobacillus salivarius)).